Reading from the N-terminus, the 776-residue chain is Rho guanine nucleotide exchange factor 6 (776 aa).

Positions methionine 1–glutamate 111 constitute a Calponin-homology (CH) domain. Residues serine 115–lysine 151 are disordered. Polar residues predominate over residues arginine 121–lysine 151. Serine 126 bears the Phosphoserine mark. Residue threonine 133 is modified to Phosphothreonine. Serine 144 and serine 150 each carry phosphoserine. The 60-residue stretch at serine 160–serine 219 folds into the SH3 domain. At serine 225 the chain carries Phosphoserine. The DH domain occupies tyrosine 241–leucine 421. The PH domain occupies aspartate 443 to arginine 548. Serine 488 bears the Phosphoserine mark. Over residues serine 561–serine 572 the composition is skewed to low complexity. Positions serine 561–glutamate 581 are disordered. Phosphoserine is present on residues serine 640 and serine 684.

As to quaternary structure, interacts with PAK kinases through the SH3 domain. Interacts with GIT1. Component of cytoplasmic complexes, which also contain PXN, GIT1 and PAK1. Interacts with PARVB. Interacts with BIN2. Identified in a complex with BIN2 and GIT2. Interacts with PARVG; the guanine nucleotide exchange factor activity of ARHGEF6 is essential for PARVG-induced enhancement of cell spreading. In terms of tissue distribution, ubiquitous.

It localises to the cell projection. The protein resides in the lamellipodium. Its function is as follows. Acts as a RAC1 guanine nucleotide exchange factor (GEF). The sequence is that of Rho guanine nucleotide exchange factor 6 (ARHGEF6) from Homo sapiens (Human).